The chain runs to 503 residues: ATP synthase subunit alpha, chloroplastic (503 aa).

An ATP-binding site is contributed by 170-177 (GDRQTGKT).

The protein belongs to the ATPase alpha/beta chains family. As to quaternary structure, F-type ATPases have 2 components, CF(1) - the catalytic core - and CF(0) - the membrane proton channel. CF(1) has five subunits: alpha(3), beta(3), gamma(1), delta(1), epsilon(1). CF(0) has four main subunits: a, b, b' and c.

The protein resides in the plastid. It localises to the chloroplast thylakoid membrane. The catalysed reaction is ATP + H2O + 4 H(+)(in) = ADP + phosphate + 5 H(+)(out). Functionally, produces ATP from ADP in the presence of a proton gradient across the membrane. The alpha chain is a regulatory subunit. The polypeptide is ATP synthase subunit alpha, chloroplastic (Gracilaria tenuistipitata var. liui (Red alga)).